The following is a 541-amino-acid chain: CTP synthase (541 aa).

Residues Met-1–Val-271 are amidoligase domain. Ser-19 lines the CTP pocket. Ser-19 contributes to the UTP binding site. ATP contacts are provided by residues Ser-20–Leu-25 and Asp-77. Mg(2+) is bound by residues Asp-77 and Glu-145. Residues Asp-152–Glu-154, Lys-192–Gln-197, and Lys-228 each bind CTP. Residues Lys-192–Gln-197 and Lys-228 contribute to the UTP site. The Glutamine amidotransferase type-1 domain occupies Val-296 to Ala-537. Gly-355 provides a ligand contact to L-glutamine. The active-site Nucleophile; for glutamine hydrolysis is Cys-382. L-glutamine is bound by residues Leu-383–Gln-386, Glu-406, and Arg-465. Catalysis depends on residues His-510 and Glu-512.

The protein belongs to the CTP synthase family. Homotetramer.

It carries out the reaction UTP + L-glutamine + ATP + H2O = CTP + L-glutamate + ADP + phosphate + 2 H(+). The enzyme catalyses L-glutamine + H2O = L-glutamate + NH4(+). The catalysed reaction is UTP + NH4(+) + ATP = CTP + ADP + phosphate + 2 H(+). The protein operates within pyrimidine metabolism; CTP biosynthesis via de novo pathway; CTP from UDP: step 2/2. With respect to regulation, allosterically activated by GTP, when glutamine is the substrate; GTP has no effect on the reaction when ammonia is the substrate. The allosteric effector GTP functions by stabilizing the protein conformation that binds the tetrahedral intermediate(s) formed during glutamine hydrolysis. Inhibited by the product CTP, via allosteric rather than competitive inhibition. Its function is as follows. Catalyzes the ATP-dependent amination of UTP to CTP with either L-glutamine or ammonia as the source of nitrogen. Regulates intracellular CTP levels through interactions with the four ribonucleotide triphosphates. In Anaplasma phagocytophilum (strain HZ), this protein is CTP synthase.